A 68-amino-acid chain; its full sequence is Small ribosomal subunit protein bS21 (68 aa).

The segment at 35 to 68 (HYEKPSEKRARERAAAVRRARKMERKRMERDGIK) is disordered. Positions 37–49 (EKPSEKRARERAA) are enriched in basic and acidic residues. Positions 50–59 (AVRRARKMER) are enriched in basic residues.

This sequence belongs to the bacterial ribosomal protein bS21 family.

This chain is Small ribosomal subunit protein bS21, found in Sphingopyxis alaskensis (strain DSM 13593 / LMG 18877 / RB2256) (Sphingomonas alaskensis).